A 247-amino-acid polypeptide reads, in one-letter code: MRTLVLIRHGESVWNRENRFTGWTDVGLTDKGAAEALRAGRTLKNEGFAFDEAFTSVLKRAIKTLWIVLEEMDQMWIPEHRHWRLNERHYGALQGLNKAETAERHGMEQVHVWRRSYDIPPPPLAAGDPRNPARDPRYAELDPADIPLTESLKDTVARFLPYWHETIAPRILAGRRLLIAAHGNSLRALVKYLDGIGDDAIAGLNIPTGIPLVYELEDDLHPIRSYYLGDPDEVARATQSVADQVKR.

Substrate-binding positions include arginine 8–asparagine 15, threonine 21–glycine 22, arginine 60, glutamate 87–tyrosine 90, lysine 98, arginine 114–arginine 115, and glycine 183–asparagine 184. The Tele-phosphohistidine intermediate role is filled by histidine 9. The Proton donor/acceptor role is filled by glutamate 87.

The protein belongs to the phosphoglycerate mutase family. BPG-dependent PGAM subfamily. In terms of assembly, homodimer.

The enzyme catalyses (2R)-2-phosphoglycerate = (2R)-3-phosphoglycerate. Its pathway is carbohydrate degradation; glycolysis; pyruvate from D-glyceraldehyde 3-phosphate: step 3/5. Catalyzes the interconversion of 2-phosphoglycerate and 3-phosphoglycerate. The chain is 2,3-bisphosphoglycerate-dependent phosphoglycerate mutase from Geobacter sulfurreducens (strain ATCC 51573 / DSM 12127 / PCA).